The following is a 43-amino-acid chain: MPKYGFHQSTELINGRLAMLAFILSLFIEFITEQKILHFLKFL.

The protein belongs to the ELIP/psbS family.

The protein resides in the plastid. The protein localises to the chloroplast. Possible role in chlorophyll and/or carotenoid binding. This is an uncharacterized protein from Cyanidium caldarium (Red alga).